Consider the following 175-residue polypeptide: Protein GrpE (175 aa).

Residues 1–35 (MSEQKQEIENENAQNSENLQDDLQDNEKNETNELQ) form a disordered region. Over residues 25–35 (DNEKNETNELQ) the composition is skewed to basic and acidic residues.

Belongs to the GrpE family. In terms of assembly, homodimer.

The protein resides in the cytoplasm. Its function is as follows. Participates actively in the response to hyperosmotic and heat shock by preventing the aggregation of stress-denatured proteins, in association with DnaK and GrpE. It is the nucleotide exchange factor for DnaK and may function as a thermosensor. Unfolded proteins bind initially to DnaJ; upon interaction with the DnaJ-bound protein, DnaK hydrolyzes its bound ATP, resulting in the formation of a stable complex. GrpE releases ADP from DnaK; ATP binding to DnaK triggers the release of the substrate protein, thus completing the reaction cycle. Several rounds of ATP-dependent interactions between DnaJ, DnaK and GrpE are required for fully efficient folding. This Campylobacter jejuni (strain RM1221) protein is Protein GrpE.